The primary structure comprises 365 residues: MIIDTTTVQAINSFSRLKSLNEVYGIIWMLVPILTLVLGITIGILVIVWLEREISAGIQQRIGPEYAGPFGVLQALADGTKLLFKENLFPSRGDTRLFSIGPSIAVISTLLSYSVIPFGYHFVLADLNIGVFLWIAISSIAPIGLLMSGYGSNNKYSFLGGLRAAAQSISYEIPLTLCVLSISLLSNSSSTVDIVEAQSKYGLGGWNLWRQPIGFIIFFISSLAECERLPFDLPEAEEELVAGYQTEYSGIKFGLFYVASYLNLLVSSLFVAVLYLGGWNISIPYISVPEFFDFEINKVGRVFGTTMGILITLVKTYLFLFIPITTRWTLPRLRMDQLLNLGWKFLLPISLGNLLLTTSSQLFSL.

6 helical membrane passes run 30 to 50, 104 to 124, 129 to 149, 253 to 273, 302 to 322, and 338 to 358; these read LVPILTLVLGITIGILVIVWL, IAVISTLLSYSVIPFGYHFVL, IGVFLWIAISSIAPIGLLMSG, FGLFYVASYLNLLVSSLFVAV, VFGTTMGILITLVKTYLFLFI, and LLNLGWKFLLPISLGNLLLTT.

This sequence belongs to the complex I subunit 1 family. NDH is composed of at least 16 different subunits, 5 of which are encoded in the nucleus.

It localises to the plastid. The protein resides in the chloroplast thylakoid membrane. The enzyme catalyses a plastoquinone + NADH + (n+1) H(+)(in) = a plastoquinol + NAD(+) + n H(+)(out). It carries out the reaction a plastoquinone + NADPH + (n+1) H(+)(in) = a plastoquinol + NADP(+) + n H(+)(out). Functionally, NDH shuttles electrons from NAD(P)H:plastoquinone, via FMN and iron-sulfur (Fe-S) centers, to quinones in the photosynthetic chain and possibly in a chloroplast respiratory chain. The immediate electron acceptor for the enzyme in this species is believed to be plastoquinone. Couples the redox reaction to proton translocation, and thus conserves the redox energy in a proton gradient. The protein is NAD(P)H-quinone oxidoreductase subunit 1, chloroplastic of Populus trichocarpa (Western balsam poplar).